A 361-amino-acid polypeptide reads, in one-letter code: Biotin synthase (361 aa).

Positions 83–308 constitute a Radical SAM core domain; it reads PEVEVEGIIS…RTILRYAGGR (226 aa). Residues Cys-98, Cys-102, and Cys-105 each contribute to the [4Fe-4S] cluster site. Residues Cys-141, Cys-174, Cys-233, and Arg-303 each contribute to the [2Fe-2S] cluster site.

The protein belongs to the radical SAM superfamily. Biotin synthase family. In terms of assembly, homodimer. [4Fe-4S] cluster is required as a cofactor. Requires [2Fe-2S] cluster as cofactor.

It carries out the reaction (4R,5S)-dethiobiotin + (sulfur carrier)-SH + 2 reduced [2Fe-2S]-[ferredoxin] + 2 S-adenosyl-L-methionine = (sulfur carrier)-H + biotin + 2 5'-deoxyadenosine + 2 L-methionine + 2 oxidized [2Fe-2S]-[ferredoxin]. It participates in cofactor biosynthesis; biotin biosynthesis; biotin from 7,8-diaminononanoate: step 2/2. Functionally, catalyzes the conversion of dethiobiotin (DTB) to biotin by the insertion of a sulfur atom into dethiobiotin via a radical-based mechanism. The sequence is that of Biotin synthase from Parafrankia sp. (strain EAN1pec).